The primary structure comprises 197 residues: dCTP deaminase (197 aa).

105–110 (RSSIAR) contributes to the dCTP binding site. Residue Glu133 is the Proton donor/acceptor of the active site. DCTP contacts are provided by Tyr166 and Gln177. Positions 172 to 197 (NKYAGQKDPKPSRLAEELSLEQLRGR) are disordered. Over residues 176 to 187 (GQKDPKPSRLAE) the composition is skewed to basic and acidic residues.

The protein belongs to the dCTP deaminase family. In terms of assembly, homotrimer.

The enzyme catalyses dCTP + H2O + H(+) = dUTP + NH4(+). Its pathway is pyrimidine metabolism; dUMP biosynthesis; dUMP from dCTP (dUTP route): step 1/2. Functionally, catalyzes the deamination of dCTP to dUTP. This Thermomicrobium roseum (strain ATCC 27502 / DSM 5159 / P-2) protein is dCTP deaminase.